The sequence spans 234 residues: tRNA1(Val) (adenine(37)-N6)-methyltransferase (234 aa).

Belongs to the methyltransferase superfamily. tRNA (adenine-N(6)-)-methyltransferase family.

The protein resides in the cytoplasm. The enzyme catalyses adenosine(37) in tRNA1(Val) + S-adenosyl-L-methionine = N(6)-methyladenosine(37) in tRNA1(Val) + S-adenosyl-L-homocysteine + H(+). Its function is as follows. Specifically methylates the adenine in position 37 of tRNA(1)(Val) (anticodon cmo5UAC). The polypeptide is tRNA1(Val) (adenine(37)-N6)-methyltransferase (Aliivibrio salmonicida (strain LFI1238) (Vibrio salmonicida (strain LFI1238))).